Consider the following 545-residue polypeptide: Tetrahydrocannabinolic acid synthase (545 aa).

An N-terminal signal peptide occupies residues 1 to 28 (MNCSAFSFWFVCKIIFFFLSFHIQISIA). C37 and C99 form a disulfide bridge. N-linked (GlcNAc...) asparagine glycans are attached at residues N65 and N89. Residues 77–251 (TTPKPLVIVT…AAWKIKLVAV (175 aa)) form the FAD-binding PCMH-type domain. FAD is bound by residues 109–115 (TRSGGHD) and S120. Residues 114–176 (HDAEGMSYIS…ENLSFPGGYC (63 aa)) constitute a cross-link (6-(S-cysteinyl)-8alpha-(pros-histidyl)-FAD (His-Cys)). N168 carries an N-linked (GlcNAc...) asparagine glycan. Residues C176, 180 to 184 (GVGGH), Y190, E236, and I241 contribute to the FAD site. H292 contributes to the cannabigerolate binding site. N-linked (GlcNAc...) asparagine glycosylation is found at N297, N305, and N329. The cannabigerolate site is built by Y417 and E442. N467 carries N-linked (GlcNAc...) asparagine glycosylation. 481–483 (YLN) contributes to the FAD binding site. Catalysis depends on Y484, which acts as the Proton acceptor. N499 is a glycosylation site (N-linked (GlcNAc...) asparagine).

Belongs to the oxygen-dependent FAD-linked oxidoreductase family. In terms of assembly, monomer. The cofactor is FAD. Post-translationally, glycosylated when produced in a heterologous system. The deglycosylated THCA synthase has more catalytic activity than the glycosylated form. The FAD cofactor is bound via a bicovalent 6-S-cysteinyl, 8alpha-N1-histidyl FAD linkage. Expressed in the secretory cells of glandular trichomes.

It localises to the secreted. The protein resides in the extracellular space. The protein localises to the apoplast. The enzyme catalyses cannabigerolate + O2 = Delta(9)-tetrahydrocannabinolate + H2O2. It participates in secondary metabolite biosynthesis; terpenoid biosynthesis. Inhibited by Hg(2+). Functionally, oxidoreductase involved in the biosynthesis of cannabinoids-related terpenophenolic natural products, which have pharmacological activity. Catalyzes the oxidative cyclization of the monoterpene moiety in cannabigerolic acid (CBGA), producing delta(9)-tetrahydrocannabinolate (THCA), the major cannabioid in drug-type Cannabis plants. Can also use cannabinerolic acid as substrate, but not cannabigerol or cannabinerol. This chain is Tetrahydrocannabinolic acid synthase, found in Cannabis sativa (Hemp).